The chain runs to 687 residues: SLCO1B3-SLCO1B7 readthrough transcript protein (687 aa).

Residues 1–29 are Cytoplasmic-facing; that stretch reads MDQHQHLNKTAESASSEKKKTRRCNGFKM. A helical membrane pass occupies residues 30-50; that stretch reads FLAALSFSYIAKALGGIIMKI. The Extracellular segment spans residues 51-63; that stretch reads SITQIERRFDISS. The helical transmembrane segment at 64 to 84 threads the bilayer; it reads SLAGLIDGSFEIGNLLVIVFV. Residues 85–96 lie on the Cytoplasmic side of the membrane; sequence SYFGSKLHRPKL. A helical membrane pass occupies residues 97-117; the sequence is IGIGCLLMGTGSILTSLPHFF. Residues 118–170 lie on the Extracellular side of the membrane; it reads MGYYRYSKETNIDPSENSTSNLPNCLINQMLSLNRTPSEIIERGCVKESGSHM. N-linked (GlcNAc...) asparagine glycans are attached at residues Asn134 and Asn151. A helical membrane pass occupies residues 171–191; sequence WIYVFMGNMLRGIGETPIVPL. Topologically, residues 192–206 are cytoplasmic; sequence GISYIDDFAKEGHSS. The helical transmembrane segment at 207 to 227 threads the bilayer; the sequence is LYLGTVNVMGMTGLVFAFMLG. Over 228-258 the chain is Extracellular; it reads SLFAKMYVDIGYVDLSTIRITPKDSRWVGAW. The chain crosses the membrane as a helical span at residues 259–279; the sequence is WLGFLVSGIVSIISSIPFFFL. The Cytoplasmic segment spans residues 280 to 339; sequence PLNPNKPQKERKVSLFLHVLKTNDKRNQIANLTNRRKYITKNVTGFFQSLKSILTNPLYV. The chain crosses the membrane as a helical span at residues 340–360; that stretch reads IFVIFTLLHMSSYIASLTYII. The Extracellular segment spans residues 361–376; it reads KMVEQQYGWSASKTNF. Residues 377–397 form a helical membrane-spanning segment; it reads LLGVLALPAVAIGMFSGGYII. Over 398–409 the chain is Cytoplasmic; sequence KKFKLSLVGLAK. A helical membrane pass occupies residues 410-430; that stretch reads LAFCSATVHLLSQVLYFFLIC. The Extracellular portion of the chain corresponds to 431–539; it reads ESKSVAGLTL…CTRKSYVYFV (109 aa). Residues 453–508 enclose the Kazal-like domain; sequence DVPLSYCNSECNCDESQWEPVCGNNGITYLSPCLAGCKSSSGNKEPIVFYNCSCVE. 3 disulfide bridges follow: Cys459/Cys489, Cys465/Cys485, and Cys474/Cys506. 2 N-linked (GlcNAc...) asparagine glycosylation sites follow: Asn503 and Asn516. The helical transmembrane segment at 540–560 threads the bilayer; sequence IQVLDAFLCAVGLTSYSVLVI. At 561 to 568 the chain is on the cytoplasmic side; it reads RIVQPELK. Residues 569–589 traverse the membrane as a helical segment; sequence ALAIGFHSMIMRSLGGILVPI. Residues 590 to 624 are Extracellular-facing; the sequence is YFGALIDTTCMKWSTNSCGARGACRIYNSTYLGRA. Residue Asn617 is glycosylated (N-linked (GlcNAc...) asparagine). A helical transmembrane segment spans residues 625–645; the sequence is FFGLKVALIFPVLVLLTVFIF. Topologically, residues 646–687 are cytoplasmic; the sequence is VVRKKSHGKDTKVLENERQVMDEANLEFLNDSEHFVPSAEEQ.

The protein belongs to the organo anion transporter (TC 2.A.60) family. Expressed in the perivenular areas (centrilobular) of the liver (at protein level).

It is found in the smooth endoplasmic reticulum membrane. The protein localises to the cell membrane. It localises to the endoplasmic reticulum membrane. It carries out the reaction 17beta-estradiol 17-O-(beta-D-glucuronate)(out) = 17beta-estradiol 17-O-(beta-D-glucuronate)(in). The enzyme catalyses dehydroepiandrosterone 3-sulfate(out) = dehydroepiandrosterone 3-sulfate(in). It catalyses the reaction taurocholate(out) = taurocholate(in). The catalysed reaction is lithocholate(out) = lithocholate(in). With respect to regulation, transport activity is induced by farnesoid X receptor (FXR) agonists such as chenodeoxycholate. In terms of biological role, mediates the Na(+)-independent uptake of organic anions. Transports the conjugated steroids 17-beta-glucuronosyl estradiol (17beta-estradiol 17-O-(beta-D-glucuronate) or E2G) and dehydroepiandrosterone 3-sulfate (DHEAS) at the smooth endoplasmic reticulum membrane (SER), granting access to metabolizing enzymes. Contributes to the metabolism of bile acids such as taurocholate (cholyltaurine) and lithocholate, by functioning as a doorway between SER and cytosol, thereby decreasing their circulating levels and protecting the organism from their detergent properties. Regulates access or exit of drugs to the SER lumen. The polypeptide is SLCO1B3-SLCO1B7 readthrough transcript protein (Homo sapiens (Human)).